A 391-amino-acid polypeptide reads, in one-letter code: Sister chromatid cohesion protein DCC1 (391 aa).

Belongs to the DCC1 family. Component of the ctf18-RFC complex which consists of ctf18, ctf8, dscc1 and the RFC complex.

The protein localises to the nucleus. In terms of biological role, loads pcna onto primed templates regulating velocity, spacing and restart activity of replication forks. May couple DNA replication to sister chromatid cohesion. The protein is Sister chromatid cohesion protein DCC1 (dscc1) of Xenopus tropicalis (Western clawed frog).